We begin with the raw amino-acid sequence, 446 residues long: Na(+)-translocating NADH-quinone reductase subunit A (446 aa).

Belongs to the NqrA family. In terms of assembly, composed of six subunits; NqrA, NqrB, NqrC, NqrD, NqrE and NqrF.

It catalyses the reaction a ubiquinone + n Na(+)(in) + NADH + H(+) = a ubiquinol + n Na(+)(out) + NAD(+). NQR complex catalyzes the reduction of ubiquinone-1 to ubiquinol by two successive reactions, coupled with the transport of Na(+) ions from the cytoplasm to the periplasm. NqrA to NqrE are probably involved in the second step, the conversion of ubisemiquinone to ubiquinol. This chain is Na(+)-translocating NADH-quinone reductase subunit A, found in Vibrio atlanticus (strain LGP32) (Vibrio splendidus (strain Mel32)).